The following is a 2609-amino-acid chain: Beige protein homolog 1 (2609 aa).

2 disordered regions span residues 1654–1679 (DSKL…APVS) and 1691–1729 (ILPS…KNRT). Positions 1711–1723 (MEDEEDDVDEEDK) are enriched in acidic residues. One can recognise a BEACH-type PH domain in the interval 1735-1870 (ESGDSIQDVY…NRDSLYQKLV (136 aa)). Residues 1907 to 2202 (ANALSFSTTH…QVFKKPHPQR (296 aa)) form the BEACH domain. WD repeat units lie at residues 2249-2290 (KDEV…QPVM), 2294-2332 (LHSE…PIKA), 2340-2379 (GHRY…FVSS), 2429-2475 (NSDE…NAKL), and 2507-2546 (ATRQ…SNVH). The FYVE-type zinc-finger motif lies at 2550–2604 (DNTSELCSLCDSRFSLMEWRSQCRACGNSNVCSDCVSMLKDTNIKTCYECYRQMP).

Its subcellular location is the cytoplasm. The protein localises to the membrane. In terms of biological role, may be involved in protein sorting and cell wall formation. The polypeptide is Beige protein homolog 1 (lvs1) (Schizosaccharomyces pombe (strain 972 / ATCC 24843) (Fission yeast)).